A 461-amino-acid polypeptide reads, in one-letter code: Cysteine--tRNA ligase (461 aa).

Residue Cys-28 participates in Zn(2+) binding. A 'HIGH' region motif is present at residues 30–40; the sequence is ITIYDLCHIGH. 3 residues coordinate Zn(2+): Cys-209, His-234, and Glu-238. Positions 266-270 match the 'KMSKS' region motif; the sequence is KMSKS. Lys-269 is a binding site for ATP.

It belongs to the class-I aminoacyl-tRNA synthetase family. As to quaternary structure, monomer. Requires Zn(2+) as cofactor.

The protein localises to the cytoplasm. The enzyme catalyses tRNA(Cys) + L-cysteine + ATP = L-cysteinyl-tRNA(Cys) + AMP + diphosphate. In Yersinia pestis bv. Antiqua (strain Antiqua), this protein is Cysteine--tRNA ligase.